Consider the following 412-residue polypeptide: Eukaryotic initiation factor 4A-2 (412 aa).

A2 is subject to N-acetylalanine. Positions 39-67 (ESFDAMGLQENLLRGIYAYGFEKPSAIQQ) match the Q motif motif. In terms of domain architecture, Helicase ATP-binding spans 70-240 (IVPFCKGLDV…RKFMSKPVRI (171 aa)). 83–90 (AQSGTGKT) serves as a coordination point for ATP. At T145 the chain carries Phosphothreonine. A DEAD box motif is present at residues 188 to 191 (DEAD). Residues 251–412 (GIKQFYVNVE…ELPSNVADLL (162 aa)) enclose the Helicase C-terminal domain.

Belongs to the DEAD box helicase family. eIF4A subfamily. EIF4F is a multi-subunit complex, the composition of which varies with external and internal environmental conditions. It is composed of at least EIF4A, EIF4E and EIF4G. In terms of tissue distribution, ubiquitous. Preferentially expressed in flowers, young leaves and roots.

The protein resides in the cytoplasm. The catalysed reaction is ATP + H2O = ADP + phosphate + H(+). Its function is as follows. ATP-dependent RNA helicase which is a subunit of the eIF4F complex involved in cap recognition and is required for mRNA binding to ribosome. In the current model of translation initiation, eIF4A unwinds RNA secondary structures in the 5'-UTR of mRNAs which is necessary to allow efficient binding of the small ribosomal subunit, and subsequent scanning for the initiator codon. In Arabidopsis thaliana (Mouse-ear cress), this protein is Eukaryotic initiation factor 4A-2 (TIF4A-2).